Consider the following 213-residue polypeptide: FMN-dependent NADH:quinone oxidoreductase (213 aa).

Serine 10 contributes to the FMN binding site.

Belongs to the azoreductase type 1 family. As to quaternary structure, homodimer. The cofactor is FMN.

It carries out the reaction 2 a quinone + NADH + H(+) = 2 a 1,4-benzosemiquinone + NAD(+). It catalyses the reaction N,N-dimethyl-1,4-phenylenediamine + anthranilate + 2 NAD(+) = 2-(4-dimethylaminophenyl)diazenylbenzoate + 2 NADH + 2 H(+). Quinone reductase that provides resistance to thiol-specific stress caused by electrophilic quinones. Its function is as follows. Also exhibits azoreductase activity. Catalyzes the reductive cleavage of the azo bond in aromatic azo compounds to the corresponding amines. The protein is FMN-dependent NADH:quinone oxidoreductase of Opitutus terrae (strain DSM 11246 / JCM 15787 / PB90-1).